The sequence spans 717 residues: Translation initiation factor eIF2B subunit epsilon (717 aa).

A compositionally biased stretch (low complexity) spans 1–14 (MAATAAVPGAAAGR). A disordered region spans residues 1–37 (MAATAAVPGAAAGRASKRGGGGSGGGGTQGAEEEPPP). Position 18 is an omega-N-methylarginine (Arg18). The span at 18–29 (RGGGGSGGGGTQ) shows a compositional bias: gly residues. The residue at position 23 (Ser23) is a Phosphoserine. Residues Lys57 and Lys99 each participate in a glycyl lysine isopeptide (Lys-Gly) (interchain with G-Cter in ubiquitin) cross-link. A Phosphoserine modification is found at Ser126. Residues Lys137 and Lys213 each participate in a glycyl lysine isopeptide (Lys-Gly) (interchain with G-Cter in ubiquitin) cross-link. Thr318 carries the post-translational modification Phosphothreonine. Residues 442-479 (GSVISLHPPDAEEDEDDGQFSDDSGADQEKEKVKLKGY) are disordered. Ser446, Ser462, and Ser465 each carry phosphoserine. Over residues 452-467 (AEEDEDDGQFSDDSGA) the composition is skewed to acidic residues. A Glycyl lysine isopeptide (Lys-Gly) (interchain with G-Cter in ubiquitin) cross-link involves residue Lys501. The segment at 517-538 (TEEESETESEGSVDPEELDSRA) is disordered. The span at 519-533 (EESETESEGSVDPEE) shows a compositional bias: acidic residues. 2 positions are modified to phosphoserine: Ser528 and Ser536. In terms of domain architecture, W2 spans 539 to 716 (GSPQLDDIRV…REAEEESSED (178 aa)). The residue at position 540 (Ser540) is a Phosphoserine; by DYRK2. Ser713 bears the Phosphoserine mark.

This sequence belongs to the eIF-2B gamma/epsilon subunits family. Component of the translation initiation factor 2B (eIF2B) complex which is a heterodecamer of two sets of five different subunits: alpha, beta, gamma, delta and epsilon. Subunits alpha, beta and delta comprise a regulatory subcomplex and subunits epsilon and gamma comprise a catalytic subcomplex. Within the complex, the hexameric regulatory complex resides at the center, with the two heterodimeric catalytic subcomplexes bound on opposite sides. Post-translationally, phosphorylated at Ser-540 by DYRK2; this is required for subsequent phosphorylation by GSK3B. Phosphorylated on serine and threonine residues by GSK3B; phosphorylation inhibits its function. In terms of processing, polyubiquitinated, probably by NEDD4.

The protein resides in the cytoplasm. It localises to the cytosol. With respect to regulation, activated by the chemical integrated stress response (ISR) inhibitor ISRIB which stimulates guanine nucleotide exchange factor activity for both phosphorylated and unphosphorylated eIF2. Its function is as follows. Acts as a component of the translation initiation factor 2B (eIF2B) complex, which catalyzes the exchange of GDP for GTP on eukaryotic initiation factor 2 (eIF2) gamma subunit. Its guanine nucleotide exchange factor activity is repressed when bound to eIF2 complex phosphorylated on the alpha subunit, thereby limiting the amount of methionyl-initiator methionine tRNA available to the ribosome and consequently global translation is repressed. This is Translation initiation factor eIF2B subunit epsilon (Eif2b5) from Mus musculus (Mouse).